Reading from the N-terminus, the 713-residue chain is Segment polarity protein dishevelled homolog DVL-3 (713 aa).

A DIX domain is found at 1–82 (MGETKVIYHL…RVVCWLVSAD (82 aa)). Composition is skewed to polar residues over residues 87–98 (DAGSVCADNQSD) and 118–127 (HPNTRGSQEN). The tract at residues 87 to 235 (DAGSVCADNQ…PRIERSSSFS (149 aa)) is disordered. The span at 140–155 (AHRERPRRKETPEHAT) shows a compositional bias: basic and acidic residues. Positions 173 to 189 (ESSSTLMSSELDSTSFF) are enriched in low complexity. Residues 199 to 210 (RFSNSTEQSSAS) are compositionally biased toward polar residues. Positions 212 to 225 (LMRRHKRRRRKPKA) are enriched in basic residues. One can recognise a PDZ domain in the interval 248 to 333 (TVTLNMEKYN…KPGPITLTVA (86 aa)). The 75-residue stretch at 421–495 (PESGLEVRDR…SEQCYYIFGD (75 aa)) folds into the DEP domain. Polar residues predominate over residues 508–518 (HDGSSGTSDQD). 2 disordered regions span residues 508-527 (HDGSSGTSDQDTLAPLPHPG) and 545-652 (YSPH…GPPG). Positions 564-579 (GSQHSEGSRSSGSNRS) are enriched in low complexity. Composition is skewed to basic and acidic residues over residues 580 to 593 (STEKRKEREAKGGD) and 602 to 618 (ESDHTTRSSVRRERAAS). The span at 629-646 (HRSHHSIAHSIRSHHTHH) shows a compositional bias: basic residues.

It belongs to the DSH family.

It is found in the cytoplasm. Functionally, involved in the signal transduction pathway mediated by multiple Wnt genes. Required during ciliogenesis for the docking of basal bodies to the apical plasma membrane. In Xenopus tropicalis (Western clawed frog), this protein is Segment polarity protein dishevelled homolog DVL-3.